A 162-amino-acid polypeptide reads, in one-letter code: Large ribosomal subunit protein uL10 (162 aa).

This sequence belongs to the universal ribosomal protein uL10 family. In terms of assembly, part of the ribosomal stalk of the 50S ribosomal subunit. The N-terminus interacts with L11 and the large rRNA to form the base of the stalk. The C-terminus forms an elongated spine to which L12 dimers bind in a sequential fashion forming a multimeric L10(L12)X complex.

Functionally, forms part of the ribosomal stalk, playing a central role in the interaction of the ribosome with GTP-bound translation factors. The chain is Large ribosomal subunit protein uL10 from Vibrio vulnificus (strain CMCP6).